Reading from the N-terminus, the 101-residue chain is Chaperone modulatory protein CbpM (101 aa).

Belongs to the CbpM family.

Its function is as follows. Interacts with CbpA and inhibits both the DnaJ-like co-chaperone activity and the DNA binding activity of CbpA. Together with CbpA, modulates the activity of the DnaK chaperone system. Does not inhibit the co-chaperone activity of DnaJ. The polypeptide is Chaperone modulatory protein CbpM (Pseudomonas putida (strain GB-1)).